Reading from the N-terminus, the 321-residue chain is RNA/RNP complex-1-interacting phosphatase (321 aa).

Basic residues predominate over residues 1-11 (MNQHYGRHGRG). The segment at 1 to 27 (MNQHYGRHGRGRGRDFAACAPPKKKGR) is disordered. Residues 60–207 (FEAKLMPEEC…LQKRHVRKNR (148 aa)) form the Tyrosine-protein phosphatase domain. Cys151 functions as the Phosphocysteine intermediate in the catalytic mechanism. Substrate is bound at residue 152 to 157 (THGLNR). The active-site Proton donor/acceptor is Arg157. Residues 205-262 (KNRNVSAPRTDGLEDSADPTEQVYTNNKPVKKKPRKNRRGGHLAPSQHFQHQTQSSPY) are disordered. Basic residues predominate over residues 233 to 245 (PVKKKPRKNRRGG). The segment covering 251–262 (QHFQHQTQSSPY) has biased composition (polar residues).

Belongs to the protein-tyrosine phosphatase family. Non-receptor class dual specificity subfamily. In terms of assembly, monomer. May interact with SFRS7 and SFRS9/SRP30C.

It is found in the nucleus. Its subcellular location is the nucleus speckle. Functionally, possesses RNA 5'-triphosphatase and diphosphatase activities, but displays a poor protein-tyrosine phosphatase activity. In addition, has phosphatase activity with ATP, ADP and O-methylfluorescein phosphate (in vitro). Binds to RNA. May participate in nuclear mRNA metabolism. The protein is RNA/RNP complex-1-interacting phosphatase (Dusp11) of Mus musculus (Mouse).